We begin with the raw amino-acid sequence, 371 residues long: Anhydro-N-acetylmuramic acid kinase (371 aa).

An ATP-binding site is contributed by Gly-10–Asp-17.

Belongs to the anhydro-N-acetylmuramic acid kinase family.

It carries out the reaction 1,6-anhydro-N-acetyl-beta-muramate + ATP + H2O = N-acetyl-D-muramate 6-phosphate + ADP + H(+). It functions in the pathway amino-sugar metabolism; 1,6-anhydro-N-acetylmuramate degradation. The protein operates within cell wall biogenesis; peptidoglycan recycling. In terms of biological role, catalyzes the specific phosphorylation of 1,6-anhydro-N-acetylmuramic acid (anhMurNAc) with the simultaneous cleavage of the 1,6-anhydro ring, generating MurNAc-6-P. Is required for the utilization of anhMurNAc either imported from the medium or derived from its own cell wall murein, and thus plays a role in cell wall recycling. The chain is Anhydro-N-acetylmuramic acid kinase from Chromohalobacter salexigens (strain ATCC BAA-138 / DSM 3043 / CIP 106854 / NCIMB 13768 / 1H11).